The following is a 66-amino-acid chain: uncharacterized protein (66 aa).

2 helical membrane-spanning segments follow: residues 4-24 (ALFI…LLIF) and 38-58 (LLTP…ILVL).

Its subcellular location is the membrane. This is an uncharacterized protein from Saccharomyces cerevisiae (strain ATCC 204508 / S288c) (Baker's yeast).